We begin with the raw amino-acid sequence, 835 residues long: BCL11 transcription factor A (835 aa).

Positions 1-12 (MSRRKQGKPQHL) are enriched in basic residues. A disordered region spans residues 1 to 41 (MSRRKQGKPQHLSKREFSPEPLEAILTDDEPDHGPLGAPEG). The required for nuclear body formation and for SUMO1 recruitment stretch occupies residues 1-210 (MSRRKQGKPQ…SEHGSPLTPR (210 aa)). The C2HC-type zinc finger occupies 45-71 (LLTCGQCQMNFPLGDILIFIEHKRKQC). Zn(2+)-binding residues include Cys-48, Cys-51, His-66, and Cys-71. The residue at position 86 (Ser-86) is a Phosphoserine. A Glycyl lysine isopeptide (Lys-Gly) (interchain with G-Cter in SUMO2) cross-link involves residue Lys-123. Ile-162 carries the post-translational modification Phosphothreonine. A Glycyl lysine isopeptide (Lys-Gly) (interchain with G-Cter in SUMO2) cross-link involves residue Lys-164. The C2H2-type 1 zinc-finger motif lies at 170-193 (YTCTTCKQPFTSAWFLLQHAQNTH). At Ser-205 the chain carries Phosphoserine. Pro-214 is modified (phosphothreonine). Arg-271 bears the Asymmetric dimethylarginine mark. The interval 323-376 (AGNTSSPPLSPGRPSPMQRLLQPFQPGSKPPFLATPPLPPLQSAPPPSQPPVKS) is disordered. Phosphoserine is present on residues Ser-332 and Ser-337. The span at 355-372 (LATPPLPPLQSAPPPSQP) shows a compositional bias: pro residues. 2 C2H2-type zinc fingers span residues 377-399 (KSCEFCGKTFKFQSNLVVHRRSH) and 405-429 (YKCNLCDHACTQASKLKRHMKTHMH). Basic residues predominate over residues 421–430 (KRHMKTHMHK). Disordered regions lie at residues 421 to 458 (KRHMKTHMHKSSPMTVKSDDGLSTASSPEPGTSDLVGS), 471 to 512 (KSEN…ERVD), and 572 to 619 (RSHL…GLSK). Over residues 441–450 (GLSTASSPEP) the composition is skewed to polar residues. Phosphoserine occurs at positions 446 and 447. Positions 482-506 (NGDEEEEEDDEEEEEEEEEEEEELT) are enriched in acidic residues. Positions 574–584 (HLAEAEGHRDT) are enriched in basic and acidic residues. Ser-608 bears the Phosphoserine mark. Lys-620 is covalently cross-linked (Glycyl lysine isopeptide (Lys-Gly) (interchain with G-Cter in SUMO2)). Ser-625 and Ser-630 each carry phosphoserine. Residue Lys-634 forms a Glycyl lysine isopeptide (Lys-Gly) (interchain with G-Cter in SUMO1) linkage. The segment covering 682–696 (SPFASSSEHSSENGS) has biased composition (low complexity). At Thr-701 the chain carries Phosphothreonine. Gly residues predominate over residues 706–720 (LDGGISGRSGTGSGG). The segment at 737 to 835 (EGRRSDTCEY…RVLNNDIKTE (99 aa)) is DNA-binding. The segment at 742–764 (DTCEYCGKVFKNCSNLTVHRRSH) adopts a C2H2-type 4 zinc-finger fold. 4 residues coordinate Zn(2+): Cys-744, Cys-747, His-760, and His-764. Polar residues predominate over residues 764–773 (HTGERPYKCE). Residues 765 to 769 (TGERP) form a disordered region. The C2H2-type 5 zinc-finger motif lies at 770–792 (YKCELCNYACAQSSKLTRHMKTH). Positions 772, 775, 788, and 792 each coordinate Zn(2+). The interval 793–799 (GQVGKDV) is disordered. Residues 800-823 (YKCEICKMPFSVYSTLEKHMKKWH) form a C2H2-type 6 zinc finger. The Zn(2+) site is built by Cys-802, Cys-805, His-818, and His-823.

Homotetrameric; self-associates via C2HC-type zinc finger domain. Interacts with MTA2, a component of the nucleosome remodeling and deacetylase (NuRD) repressor complex. Interacts with NR2F1, PIAS3, NR2F2 and NR2F6. Interacts with TBR1. Post-translationally, sumoylated with SUMO1. As to expression, isoforms are expressed in a tissue-specific fashion. Isoforms 1, isoform 2, and isoform 3 are expressed at similar levels in testis, kidney and spleen. Isoform 1 is expressed in the stomach, and isoform 2 is expressed exclusively in the lung. Overexpression following proviral integration in hematopoietic cells results in the generation of myeloid leukemia.

It is found in the cytoplasm. The protein localises to the nucleus. Its function is as follows. Transcription factor. Associated with the BAF SWI/SNF chromatin remodeling complex. Binds to the 5'-TGACCA-3' sequence motif in regulatory regions of target genes. Involved in brain development. May play a role in hematopoiesis. Essential factor in lymphopoiesis, required for B-cell formation in fetal liver. May function as a modulator of the transcriptional repression activity of NR2F2. The chain is BCL11 transcription factor A (Bcl11a) from Mus musculus (Mouse).